The following is a 134-amino-acid chain: ATP synthase epsilon chain (134 aa).

This sequence belongs to the ATPase epsilon chain family. In terms of assembly, F-type ATPases have 2 components, CF(1) - the catalytic core - and CF(0) - the membrane proton channel. CF(1) has five subunits: alpha(3), beta(3), gamma(1), delta(1), epsilon(1). CF(0) has three main subunits: a, b and c.

The protein resides in the cell membrane. Its function is as follows. Produces ATP from ADP in the presence of a proton gradient across the membrane. This chain is ATP synthase epsilon chain, found in Listeria monocytogenes serotype 4b (strain F2365).